Consider the following 84-residue polypeptide: Beta-defensin 119 (84 aa).

The first 21 residues, 1-21 (MKLLYLFLAILLAIEEPVISG), serve as a signal peptide directing secretion. 3 disulfides stabilise this stretch: Cys-28-Cys-55, Cys-35-Cys-49, and Cys-39-Cys-56.

This sequence belongs to the beta-defensin family. Abundant expression in the male reproductive tract only. Abundant expressed in testis and the caput region of epididymis, but low in the corpus region.

It localises to the secreted. Functionally, has antibacterial activity. This Homo sapiens (Human) protein is Beta-defensin 119 (DEFB119).